Consider the following 338-residue polypeptide: MKVFYDKDADLSLIKGKQVTIIGYGSQGHAHALNLKESGVNITVGLRKGGASWSKAENAGLQVKEVAEAVKGADVVMMLLPDEQIAEVYAKEVHANIKQGAALAFAHGFNVHYGQVIPRADLDVIMIAPKAPGHTVRGTYSQGGGVPHLIAVAQDKSGAARDIALSYAAANGGGRAGIIETNFREETETDLFGEQAVLCGGTVDLIKAGFETLVEAGYAPEMAYFECLHELKLIVDLIYEGGIANMNYSISNNAEYGEYVTGPRIVTAETKKAMKAVLTDIQTGEYAKSFIIENKAGAPTLQSRRRLTAEHQIETVGAKLRSMMPWIAANKLVDQSKN.

Residues 1 to 181 enclose the KARI N-terminal Rossmann domain; that stretch reads MKVFYDKDAD…GGGRAGIIET (181 aa). Residues 24–27, Arg-47, and Ser-52 contribute to the NADP(+) site; that span reads YGSQ. His-107 is a catalytic residue. Position 133 (Gly-133) interacts with NADP(+). In terms of domain architecture, KARI C-terminal knotted spans 182–327; the sequence is NFREETETDL…AKLRSMMPWI (146 aa). Asp-190, Glu-194, Glu-226, and Glu-230 together coordinate Mg(2+). Substrate is bound at residue Ser-251.

Belongs to the ketol-acid reductoisomerase family. The cofactor is Mg(2+).

It catalyses the reaction (2R)-2,3-dihydroxy-3-methylbutanoate + NADP(+) = (2S)-2-acetolactate + NADPH + H(+). The catalysed reaction is (2R,3R)-2,3-dihydroxy-3-methylpentanoate + NADP(+) = (S)-2-ethyl-2-hydroxy-3-oxobutanoate + NADPH + H(+). Its pathway is amino-acid biosynthesis; L-isoleucine biosynthesis; L-isoleucine from 2-oxobutanoate: step 2/4. The protein operates within amino-acid biosynthesis; L-valine biosynthesis; L-valine from pyruvate: step 2/4. In terms of biological role, involved in the biosynthesis of branched-chain amino acids (BCAA). Catalyzes an alkyl-migration followed by a ketol-acid reduction of (S)-2-acetolactate (S2AL) to yield (R)-2,3-dihydroxy-isovalerate. In the isomerase reaction, S2AL is rearranged via a Mg-dependent methyl migration to produce 3-hydroxy-3-methyl-2-ketobutyrate (HMKB). In the reductase reaction, this 2-ketoacid undergoes a metal-dependent reduction by NADPH to yield (R)-2,3-dihydroxy-isovalerate. The polypeptide is Ketol-acid reductoisomerase (NADP(+)) (Paraburkholderia phytofirmans (strain DSM 17436 / LMG 22146 / PsJN) (Burkholderia phytofirmans)).